A 220-amino-acid chain; its full sequence is ATP-dependent dethiobiotin synthetase BioD (220 aa).

Residue 12 to 17 (DVGKTI) coordinates ATP. Thr-16 is a Mg(2+) binding site. Lys-37 is an active-site residue. Residue Thr-41 participates in substrate binding. Residues Asp-49, 107–110 (EGAG), 167–168 (GS), and 197–199 (PAG) each bind ATP. Mg(2+) is bound by residues Asp-49 and Glu-107.

The protein belongs to the dethiobiotin synthetase family. In terms of assembly, homodimer. The cofactor is Mg(2+).

It localises to the cytoplasm. The enzyme catalyses (7R,8S)-7,8-diammoniononanoate + CO2 + ATP = (4R,5S)-dethiobiotin + ADP + phosphate + 3 H(+). The protein operates within cofactor biosynthesis; biotin biosynthesis; biotin from 7,8-diaminononanoate: step 1/2. Catalyzes a mechanistically unusual reaction, the ATP-dependent insertion of CO2 between the N7 and N8 nitrogen atoms of 7,8-diaminopelargonic acid (DAPA, also called 7,8-diammoniononanoate) to form a ureido ring. This Corynebacterium efficiens (strain DSM 44549 / YS-314 / AJ 12310 / JCM 11189 / NBRC 100395) protein is ATP-dependent dethiobiotin synthetase BioD.